The sequence spans 418 residues: Serine hydroxymethyltransferase (418 aa).

Residues Leu-121 and 125–127 (GHL) contribute to the (6S)-5,6,7,8-tetrahydrofolate site. N6-(pyridoxal phosphate)lysine is present on Lys-230. 355–357 (SPF) contributes to the (6S)-5,6,7,8-tetrahydrofolate binding site.

This sequence belongs to the SHMT family. Homodimer. The cofactor is pyridoxal 5'-phosphate.

Its subcellular location is the cytoplasm. It carries out the reaction (6R)-5,10-methylene-5,6,7,8-tetrahydrofolate + glycine + H2O = (6S)-5,6,7,8-tetrahydrofolate + L-serine. It participates in one-carbon metabolism; tetrahydrofolate interconversion. The protein operates within amino-acid biosynthesis; glycine biosynthesis; glycine from L-serine: step 1/1. Catalyzes the reversible interconversion of serine and glycine with tetrahydrofolate (THF) serving as the one-carbon carrier. This reaction serves as the major source of one-carbon groups required for the biosynthesis of purines, thymidylate, methionine, and other important biomolecules. Also exhibits THF-independent aldolase activity toward beta-hydroxyamino acids, producing glycine and aldehydes, via a retro-aldol mechanism. The chain is Serine hydroxymethyltransferase from Streptococcus agalactiae serotype V (strain ATCC BAA-611 / 2603 V/R).